Here is a 149-residue protein sequence, read N- to C-terminus: Nucleoside diphosphate kinase (149 aa).

ATP-binding residues include K9, F57, R85, T91, R102, and N112. H115 acts as the Pros-phosphohistidine intermediate in catalysis.

Belongs to the NDK family. In terms of assembly, homotetramer. It depends on Mg(2+) as a cofactor.

It is found in the cytoplasm. The catalysed reaction is a 2'-deoxyribonucleoside 5'-diphosphate + ATP = a 2'-deoxyribonucleoside 5'-triphosphate + ADP. It catalyses the reaction a ribonucleoside 5'-diphosphate + ATP = a ribonucleoside 5'-triphosphate + ADP. Functionally, major role in the synthesis of nucleoside triphosphates other than ATP. The ATP gamma phosphate is transferred to the NDP beta phosphate via a ping-pong mechanism, using a phosphorylated active-site intermediate. The sequence is that of Nucleoside diphosphate kinase from Heliobacterium modesticaldum (strain ATCC 51547 / Ice1).